A 373-amino-acid polypeptide reads, in one-letter code: MSKLGTLGARLHHGEVGYDFVKNRKIWYGISILITITAIVGLAVRGLHMGIEFQGGAVFTTPKNMSASVAQTETWAEEASGHDAIVQKLGDGSLRIQIAGTDTQQSDQIKEDLSKNLDVSAEKINADLVGPSWGDQIANKAWQGLGIFMVLVVIYLAIAFEWRMALAAFVALIHDITITVGIYALVGFEVTPGTVIGLLTILGYSLYDTVVVFDSLKEQTRDITKQTRWTYAEIANRSINSTLVRSINTTVVALLPVAGLLFIGGGVLGAGMLNDISLSLFVGLAAGAYSSIFIATPLVADLKEAEPQMKALKKRVLAKRAQGAAKGESAESAADEGAYDADEPDDAAPAVVGPRNQPASRGRGRGRPSGKRR.

6 consecutive transmembrane segments (helical) span residues 26–46 (IWYGISILITITAIVGLAVRG), 142–162 (WQGLGIFMVLVVIYLAIAFEW), 166–186 (LAAFVALIHDITITVGIYALV), 193–213 (GTVIGLLTILGYSLYDTVVVF), 251–271 (VVALLPVAGLLFIGGGVLGAG), and 280–300 (LFVGLAAGAYSSIFIATPLVA). Over residues 322–332 (QGAAKGESAES) the composition is skewed to low complexity. The segment at 322–373 (QGAAKGESAESAADEGAYDADEPDDAAPAVVGPRNQPASRGRGRGRPSGKRR) is disordered. Over residues 333-346 (AADEGAYDADEPDD) the composition is skewed to acidic residues. The span at 362–373 (GRGRGRPSGKRR) shows a compositional bias: basic residues.

The protein belongs to the SecD/SecF family. SecF subfamily. As to quaternary structure, forms a complex with SecD. Part of the essential Sec protein translocation apparatus which comprises SecA, SecYEG and auxiliary proteins SecDF. Other proteins may also be involved.

The protein localises to the cell membrane. Its function is as follows. Part of the Sec protein translocase complex. Interacts with the SecYEG preprotein conducting channel. SecDF uses the proton motive force (PMF) to complete protein translocation after the ATP-dependent function of SecA. In Streptomyces coelicolor (strain ATCC BAA-471 / A3(2) / M145), this protein is Protein translocase subunit SecF.